The chain runs to 104 residues: ATP-dependent Clp protease adapter protein ClpS (104 aa).

This sequence belongs to the ClpS family. In terms of assembly, binds to the N-terminal domain of the chaperone ClpA.

Its function is as follows. Involved in the modulation of the specificity of the ClpAP-mediated ATP-dependent protein degradation. In Bordetella bronchiseptica (strain ATCC BAA-588 / NCTC 13252 / RB50) (Alcaligenes bronchisepticus), this protein is ATP-dependent Clp protease adapter protein ClpS.